We begin with the raw amino-acid sequence, 274 residues long: Energy-coupling factor transporter ATP-binding protein EcfA1 (274 aa).

The region spanning 9 to 240 is the ABC transporter domain; it reads CSFINVAFSY…EQELQKIRLD (232 aa). Residue 41–48 coordinates ATP; it reads GHNGSGKS.

It belongs to the ABC transporter superfamily. Energy-coupling factor EcfA family. As to quaternary structure, forms a stable energy-coupling factor (ECF) transporter complex composed of 2 membrane-embedded substrate-binding proteins (S component), 2 ATP-binding proteins (A component) and 2 transmembrane proteins (T component).

Its subcellular location is the cell membrane. ATP-binding (A) component of a common energy-coupling factor (ECF) ABC-transporter complex. Unlike classic ABC transporters this ECF transporter provides the energy necessary to transport a number of different substrates. The polypeptide is Energy-coupling factor transporter ATP-binding protein EcfA1 (Mycoplasma genitalium (strain ATCC 33530 / DSM 19775 / NCTC 10195 / G37) (Mycoplasmoides genitalium)).